We begin with the raw amino-acid sequence, 340 residues long: Cysteinyl leukotriene receptor 1 (340 aa).

Topologically, residues methionine 1–threonine 31 are extracellular. N-linked (GlcNAc...) asparagine glycosylation is found at asparagine 6 and asparagine 18. Residues leucine 32 to isoleucine 52 traverse the membrane as a helical segment. Topologically, residues lysine 53–alanine 60 are cytoplasmic. A helical transmembrane segment spans residues tyrosine 61–leucine 81. Residues arginine 82–asparagine 109 are Extracellular-facing. A disulfide bond links cysteine 99 and cysteine 176. The chain crosses the membrane as a helical span at residues leucine 110–phenylalanine 130. Residues proline 131–lysine 144 are Cytoplasmic-facing. A helical membrane pass occupies residues isoleucine 145–threonine 165. The Extracellular portion of the chain corresponds to serine 166–serine 196. Residue asparagine 172 is glycosylated (N-linked (GlcNAc...) asparagine). Residues leucine 197–leucine 217 traverse the membrane as a helical segment. At threonine 218–lysine 233 the chain is on the cytoplasmic side. Residues alanine 234–isoleucine 254 form a helical membrane-spanning segment. The Extracellular segment spans residues glutamine 255 to serine 279. An N-linked (GlcNAc...) asparagine glycan is attached at asparagine 265. Residues valine 280–phenylalanine 300 form a helical membrane-spanning segment. At serine 301 to glutamate 340 the chain is on the cytoplasmic side.

The protein belongs to the G-protein coupled receptor 1 family.

The protein resides in the cell membrane. Functionally, receptor for cysteinyl leukotrienes mediating constriction of the microvascular smooth muscle during an inflammatory response. This response is mediated via a G-protein that activates a phosphatidylinositol-calcium second messenger system. The protein is Cysteinyl leukotriene receptor 1 (CYSLTR1) of Sus scrofa (Pig).